Here is a 467-residue protein sequence, read N- to C-terminus: Putative laccase-16 (467 aa).

Plastocyanin-like domains lie at 7-88 (VLGS…PKHG), 98-225 (KEIP…YTDS), and 318-451 (DFPN…KDGK). His-22, His-24, His-67, and His-69 together coordinate Cu cation. Cu cation-binding residues include His-368, His-371, His-373, His-430, Cys-431, His-432, His-436, and Met-441.

It belongs to the multicopper oxidase family. It depends on Cu cation as a cofactor.

The protein localises to the secreted. The protein resides in the extracellular space. Its subcellular location is the apoplast. It catalyses the reaction 4 hydroquinone + O2 = 4 benzosemiquinone + 2 H2O. Lignin degradation and detoxification of lignin-derived products. This is Putative laccase-16 (LAC16) from Oryza sativa subsp. japonica (Rice).